A 269-amino-acid polypeptide reads, in one-letter code: Undecaprenyl-diphosphatase (269 aa).

Transmembrane regions (helical) follow at residues 1 to 21 (MSIF…FLPI), 39 to 59 (LPIL…CTVF), 86 to 106 (LMMI…GLLL), 112 to 132 (TIDI…LIAS), 144 to 164 (VTLL…IPGI), 184 to 204 (AGEF…ILEI), 210 to 230 (LLAG…FVVG), and 249 to 269 (FAFY…GFAG).

The protein belongs to the UppP family.

The protein resides in the cell inner membrane. It catalyses the reaction di-trans,octa-cis-undecaprenyl diphosphate + H2O = di-trans,octa-cis-undecaprenyl phosphate + phosphate + H(+). Functionally, catalyzes the dephosphorylation of undecaprenyl diphosphate (UPP). Confers resistance to bacitracin. The sequence is that of Undecaprenyl-diphosphatase from Treponema denticola (strain ATCC 35405 / DSM 14222 / CIP 103919 / JCM 8153 / KCTC 15104).